Here is a 348-residue protein sequence, read N- to C-terminus: uncharacterized protein (348 aa).

This sequence belongs to the Mu gp47/PBSX XkdT family.

This is an uncharacterized protein from Bacillus subtilis (strain 168).